The primary structure comprises 646 residues: Altered inheritance of mitochondria protein 9, mitochondrial (646 aa).

Residues 1-34 (MLRIPSRIGSRQVLACAGRNLKCGSVMRHISRRN) constitute a mitochondrion transit peptide.

The protein belongs to the AIM9 family.

It localises to the mitochondrion. The sequence is that of Altered inheritance of mitochondria protein 9, mitochondrial (AIM9) from Candida glabrata (strain ATCC 2001 / BCRC 20586 / JCM 3761 / NBRC 0622 / NRRL Y-65 / CBS 138) (Yeast).